The chain runs to 162 residues: NADH-quinone oxidoreductase subunit E (162 aa).

[2Fe-2S] cluster-binding residues include Cys88, Cys93, Cys129, and Cys133.

This sequence belongs to the complex I 24 kDa subunit family. In terms of assembly, composed of 13 different subunits. Subunits NuoCD, E, F, and G constitute the peripheral sector of the complex. [2Fe-2S] cluster serves as cofactor.

The catalysed reaction is a quinone + NADH + 5 H(+)(in) = a quinol + NAD(+) + 4 H(+)(out). In terms of biological role, NDH-1 shuttles electrons from NADH, via FMN and iron-sulfur (Fe-S) centers, to quinones in the respiratory chain. Couples the redox reaction to proton translocation (for every two electrons transferred, four hydrogen ions are translocated across the cytoplasmic membrane), and thus conserves the redox energy in a proton gradient. This chain is NADH-quinone oxidoreductase subunit E (nuoE), found in Buchnera aphidicola subsp. Acyrthosiphon pisum (strain APS) (Acyrthosiphon pisum symbiotic bacterium).